A 558-amino-acid chain; its full sequence is Urocanate hydratase (558 aa).

NAD(+)-binding positions include 54–55 (GG), Gln132, 178–180 (GMG), Glu198, 244–245 (NA), 265–269 (QTSAH), 275–276 (YL), and Tyr324. The active site involves Cys412. NAD(+) is bound at residue Gly494.

This sequence belongs to the urocanase family. It depends on NAD(+) as a cofactor.

The protein resides in the cytoplasm. The catalysed reaction is 4-imidazolone-5-propanoate = trans-urocanate + H2O. It functions in the pathway amino-acid degradation; L-histidine degradation into L-glutamate; N-formimidoyl-L-glutamate from L-histidine: step 2/3. In terms of biological role, catalyzes the conversion of urocanate to 4-imidazolone-5-propionate. The chain is Urocanate hydratase from Acinetobacter baumannii (strain AB307-0294).